Reading from the N-terminus, the 83-residue chain is MSSGGLLLLLGLLTLWEVLTPVSSKDRPKFCELLPDTGSCEDFTGAFHYSTRDRECIEFIYGGCGGNANNFKTLEECESTCAA.

Positions 1–24 are cleaved as a signal peptide; that stretch reads MSSGGLLLLLGLLTLWEVLTPVSS. One can recognise a BPTI/Kunitz inhibitor domain in the interval 31 to 81; it reads CELLPDTGSCEDFTGAFHYSTRDRECIEFIYGGCGGNANNFKTLEECESTC. Intrachain disulfides connect Cys-31–Cys-81, Cys-40–Cys-64, and Cys-56–Cys-77.

Belongs to the venom Kunitz-type family. As to expression, expressed by the venom gland.

It localises to the secreted. Serine protease inhibitor. This is Kunitz-type serine protease inhibitor textilinin-7 from Pseudonaja textilis textilis (Eastern brown snake).